We begin with the raw amino-acid sequence, 157 residues long: Cyclic pyranopterin monophosphate synthase (157 aa).

Residues 74 to 76 and 110 to 111 contribute to the substrate site; these read MCH and ME. D125 is an active-site residue.

It belongs to the MoaC family. Homohexamer; trimer of dimers.

The enzyme catalyses (8S)-3',8-cyclo-7,8-dihydroguanosine 5'-triphosphate = cyclic pyranopterin phosphate + diphosphate. It participates in cofactor biosynthesis; molybdopterin biosynthesis. Catalyzes the conversion of (8S)-3',8-cyclo-7,8-dihydroguanosine 5'-triphosphate to cyclic pyranopterin monophosphate (cPMP). The sequence is that of Cyclic pyranopterin monophosphate synthase from Peptoclostridium acidaminophilum (Eubacterium acidaminophilum).